A 382-amino-acid chain; its full sequence is Mannitol-1-phosphate 5-dehydrogenase (382 aa).

3 to 14 (ALHFGAGNIGRG) contributes to the NAD(+) binding site.

It belongs to the mannitol dehydrogenase family.

It catalyses the reaction D-mannitol 1-phosphate + NAD(+) = beta-D-fructose 6-phosphate + NADH + H(+). This Salmonella enteritidis PT4 (strain P125109) protein is Mannitol-1-phosphate 5-dehydrogenase.